The chain runs to 242 residues: ATP synthase subunit a, organellar chromatophore (242 aa).

A run of 5 helical transmembrane segments spans residues 28–48 (LHGQ…VLVI), 89–109 (LPFI…GALV), 128–148 (INTT…AGLS), 193–213 (LVVG…AMFL), and 214–234 (GLFT…NYIG).

Belongs to the ATPase A chain family. As to quaternary structure, F-type ATPases have 2 components, CF(1) - the catalytic core - and CF(0) - the membrane proton channel. CF(1) has five subunits: alpha(3), beta(3), gamma(1), delta(1), epsilon(1). CF(0) has four main subunits: a, b, b' and c.

The protein localises to the plastid. Its subcellular location is the organellar chromatophore thylakoid membrane. Functionally, key component of the proton channel; it plays a direct role in the translocation of protons across the membrane. The sequence is that of ATP synthase subunit a, organellar chromatophore from Paulinella chromatophora.